Reading from the N-terminus, the 279-residue chain is NADPH-dependent 7-cyano-7-deazaguanine reductase (279 aa).

Position 86–88 (86–88 (IES)) interacts with substrate. Residue 88–89 (SK) coordinates NADPH. Cys187 acts as the Thioimide intermediate in catalysis. Catalysis depends on Asp194, which acts as the Proton donor. 226 to 227 (HE) contacts substrate. Residue 255–256 (RG) participates in NADPH binding.

This sequence belongs to the GTP cyclohydrolase I family. QueF type 2 subfamily. Homodimer.

The protein resides in the cytoplasm. It carries out the reaction 7-aminomethyl-7-carbaguanine + 2 NADP(+) = 7-cyano-7-deazaguanine + 2 NADPH + 3 H(+). Its pathway is tRNA modification; tRNA-queuosine biosynthesis. In terms of biological role, catalyzes the NADPH-dependent reduction of 7-cyano-7-deazaguanine (preQ0) to 7-aminomethyl-7-deazaguanine (preQ1). In Actinobacillus pleuropneumoniae serotype 5b (strain L20), this protein is NADPH-dependent 7-cyano-7-deazaguanine reductase.